The following is a 655-amino-acid chain: Inactive serine protease scarface (655 aa).

The signal sequence occupies residues 1-24; sequence MSASHFREQLALCITLAVLAAASG. 2 stretches are compositionally biased toward polar residues: residues 213-225 and 237-252; these read TQAP…TTAV and PSTT…QTSR. The interval 213–319 is disordered; that stretch reads TQAPFRPQPT…QPSNQKPIYR (107 aa). The CLIP stretch occupies residues 343–407; that stretch reads KCASALVCTS…PNYVDPWPVN (65 aa). 7 disulfides stabilise this stretch: cysteine 344–cysteine 394, cysteine 350–cysteine 383, cysteine 356–cysteine 395, cysteine 450–cysteine 466, cysteine 547–cysteine 605, cysteine 579–cysteine 587, and cysteine 595–cysteine 623. Positions 421–644 constitute a Peptidase S1 domain; the sequence is PTGVKDLDAN…DIKWINTAFA (224 aa).

This sequence belongs to the peptidase S1 family.

The protein resides in the secreted. Inactive serine protease that plays a role in germ-band retraction and dorsal closure morphogenesis in embryogenesis; contributes to amnioserosa attachment and epithelial apico-basal polarity by regulating the localization of laminin LanA on the apical side of the amnioserosa epithelium. Contributes to epithelial morphogenesis probably by regulating the bsk/JNK pathway, as part of a negative-feedback loop, and by modulating the cross-talk between the Egfr, bsk/JNK and dpp signal transduction pathways. In larval development, antagonizes the morphogenetic movements controlled by the bsk/JNK signaling including male genitalia formation and thorax development. The sequence is that of Inactive serine protease scarface from Drosophila melanogaster (Fruit fly).